We begin with the raw amino-acid sequence, 247 residues long: UPF0309 protein lin2794 (247 aa).

Residues 31 to 214 form the SIS domain; the sequence is VAESIENDGV…EKMVNDNFTP (184 aa).

This sequence belongs to the UPF0309 family.

The polypeptide is UPF0309 protein lin2794 (Listeria innocua serovar 6a (strain ATCC BAA-680 / CLIP 11262)).